A 175-amino-acid chain; its full sequence is Shikimate kinase (175 aa).

ATP is bound at residue 12-19; the sequence is GGRASGKS.

This sequence belongs to the shikimate kinase family.

It is found in the cytoplasm. It carries out the reaction shikimate + ATP = 3-phosphoshikimate + ADP + H(+). Its pathway is metabolic intermediate biosynthesis; chorismate biosynthesis; chorismate from D-erythrose 4-phosphate and phosphoenolpyruvate: step 5/7. The chain is Shikimate kinase from Nitratidesulfovibrio vulgaris (strain ATCC 29579 / DSM 644 / CCUG 34227 / NCIMB 8303 / VKM B-1760 / Hildenborough) (Desulfovibrio vulgaris).